Here is a 154-residue protein sequence, read N- to C-terminus: Cindoxin (154 aa).

Residues 3-145 (ALILYGTETG…TAEEWAREIL (143 aa)) enclose the Flavodoxin-like domain. FMN contacts are provided by residues 9 to 13 (TETGN) and 89 to 120 (VFGL…TQVG).

FMN is required as a cofactor.

Functionally, involved in the degradation of cineol (eucalyptol). The FMN protein, cindoxin, shuttles electrons between the FAD-containing cindoxin reductase (CinB) and 1,8-cineole 2-endo-monooxygenase (CinA). The chain is Cindoxin (cinC) from Citrobacter braakii.